A 203-amino-acid polypeptide reads, in one-letter code: Large ribosomal subunit protein uL13 (203 aa).

Position 2 is an N-acetylalanine (Ala2). Arg59 is subject to Citrulline. Residue Ser77 is modified to Phosphoserine. The residue at position 140 (Arg140) is a Citrulline. The residue at position 191 (Lys191) is an N6-acetyllysine.

It belongs to the universal ribosomal protein uL13 family. In terms of assembly, component of the 60S ribosome. Component of the GAIT complex. Interacts with EIF4G1. Phosphorylation at Ser-77 upon interferon-gamma treatment in macrophages involves a DAPK1-DAPK3 kinase cascade and is causing release from the ribosome, association with the GAIT complex and subsequent involvement in transcript-selective translation inhibition. In terms of processing, citrullinated by PADI4.

The protein localises to the cytoplasm. In terms of biological role, associated with ribosomes but is not required for canonical ribosome function and has extra-ribosomal functions. Component of the GAIT (gamma interferon-activated inhibitor of translation) complex which mediates interferon-gamma-induced transcript-selective translation inhibition in inflammation processes. Upon interferon-gamma activation and subsequent phosphorylation dissociates from the ribosome and assembles into the GAIT complex which binds to stem loop-containing GAIT elements in the 3'-UTR of diverse inflammatory mRNAs (such as ceruplasmin) and suppresses their translation. In the GAIT complex interacts with m7G cap-bound eIF4G at or near the eIF3-binding site and blocks the recruitment of the 43S ribosomal complex. Involved in methylation of rRNA. This Canis lupus familiaris (Dog) protein is Large ribosomal subunit protein uL13 (RPL13A).